Reading from the N-terminus, the 186-residue chain is Two-component response regulator ARR6 (186 aa).

The Response regulatory domain occupies 26–153; sequence HVLAVDDSHV…DVKRLRDSLM (128 aa). The residue at position 86 (D86) is a 4-aspartylphosphate.

Belongs to the ARR family. Type-A subfamily. Two-component system major event consists of a His-to-Asp phosphorelay between a sensor histidine kinase (HK) and a response regulator (RR). In plants, the His-to-Asp phosphorelay involves an additional intermediate named Histidine-containing phosphotransfer protein (HPt). This multistep phosphorelay consists of a His-Asp-His-Asp sequential transfer of a phosphate group between first a His and an Asp of the HK protein, followed by the transfer to a conserved His of the HPt protein and finally the transfer to an Asp in the receiver domain of the RR protein. Predominantly expressed in roots.

The protein resides in the nucleus. In terms of biological role, functions as a response regulator involved in His-to-Asp phosphorelay signal transduction system. Phosphorylation of the Asp residue in the receiver domain activates the ability of the protein to promote the transcription of target genes. Type-A response regulators seem to act as negative regulators of the cytokinin signaling. The sequence is that of Two-component response regulator ARR6 (ARR6) from Arabidopsis thaliana (Mouse-ear cress).